Reading from the N-terminus, the 168-residue chain is Plastocyanin, chloroplastic (168 aa).

The Plastocyanin-like domain occupies 70-168 (VEVLLGGGDG…AGMVGKVTVN (99 aa)). 4 residues coordinate Cu cation: His-106, Cys-153, His-156, and Met-161.

The protein belongs to the plastocyanin family. It depends on Cu(2+) as a cofactor.

It is found in the plastid. The protein localises to the chloroplast thylakoid membrane. In terms of biological role, participates in electron transfer between P700 and the cytochrome b6-f complex in photosystem I. This is Plastocyanin, chloroplastic (PETE) from Spinacia oleracea (Spinach).